The chain runs to 449 residues: Adenylosuccinate lyase (449 aa).

Residues 9-10, 75-77, and 102-103 contribute to the N(6)-(1,2-dicarboxyethyl)-AMP site; these read RY, KHD, and TS. The active-site Proton donor/acceptor is the His-150. Gln-224 is a N(6)-(1,2-dicarboxyethyl)-AMP binding site. The Proton donor/acceptor role is filled by Ser-275. N(6)-(1,2-dicarboxyethyl)-AMP contacts are provided by residues Ser-276, 281–283, and 320–324; these read KMN and SSERI.

This sequence belongs to the lyase 1 family. Adenylosuccinate lyase subfamily. Homotetramer. Residues from neighboring subunits contribute catalytic and substrate-binding residues to each active site.

The catalysed reaction is N(6)-(1,2-dicarboxyethyl)-AMP = fumarate + AMP. It carries out the reaction (2S)-2-[5-amino-1-(5-phospho-beta-D-ribosyl)imidazole-4-carboxamido]succinate = 5-amino-1-(5-phospho-beta-D-ribosyl)imidazole-4-carboxamide + fumarate. It participates in purine metabolism; AMP biosynthesis via de novo pathway; AMP from IMP: step 2/2. Its pathway is purine metabolism; IMP biosynthesis via de novo pathway; 5-amino-1-(5-phospho-D-ribosyl)imidazole-4-carboxamide from 5-amino-1-(5-phospho-D-ribosyl)imidazole-4-carboxylate: step 2/2. Its function is as follows. Catalyzes two reactions in de novo purine nucleotide biosynthesis. Catalyzes the breakdown of 5-aminoimidazole- (N-succinylocarboxamide) ribotide (SAICAR or 2-[5-amino-1-(5-phospho-beta-D-ribosyl)imidazole-4-carboxamido]succinate) to 5-aminoimidazole-4-carboxamide ribotide (AICAR or 5-amino-1-(5-phospho-beta-D-ribosyl)imidazole-4-carboxamide) and fumarate, and of adenylosuccinate (ADS or N(6)-(1,2-dicarboxyethyl)-AMP) to adenosine monophosphate (AMP) and fumarate. This chain is Adenylosuccinate lyase (purB), found in Methanothermobacter thermautotrophicus (strain ATCC 29096 / DSM 1053 / JCM 10044 / NBRC 100330 / Delta H) (Methanobacterium thermoautotrophicum).